Consider the following 766-residue polypeptide: Cytoplasmic polyadenylation element-binding protein 3 (766 aa).

Disordered stretches follow at residues Met1 to Thr35, Val131 to Leu179, and Pro216 to Arg299. Composition is skewed to polar residues over residues Glu233–Gln256 and Ser276–Asn289. Positions Ile310–Gly332 constitute an RRM domain. A disordered region spans residues Lys578–Ser602. Low complexity predominate over residues Leu589–Ser602.

Cytoplasmic polyadenylation element binding protein that binds to and regulates the translation of specific mRNAs. This is Cytoplasmic polyadenylation element-binding protein 3 (cpb-3) from Caenorhabditis remanei (Caenorhabditis vulgaris).